A 572-amino-acid chain; its full sequence is Nuclear hormone receptor family member nhr-25 (572 aa).

A DNA-binding region (nuclear receptor) is located at residues 15 to 90; the sequence is GEMCPVCGDR…MGMKMEAVRA (76 aa). NR C4-type zinc fingers lie at residues 18–38 and 54–78; these read CPVCGDRVSGYHYGLLTCESC and CSAEANCHVDRTCRKRCPSCRFQKC. An NR LBD domain is found at 307–567; sequence PTEKTVDHFY…PTPQATYTAV (261 aa).

The protein belongs to the nuclear hormone receptor family. In terms of assembly, interacts with lin-39. Interacts with nob-1. As to expression, expressed in the epidermis, the developing somatic gonad, and a subset of other epithelial cells.

It is found in the nucleus. In terms of biological role, orphan nuclear receptor and probable transcription activator, required during development. Plays a role in male tail tip morphogenesis regulating the expression of the transcription factor dmd-3 in a negative feedback loop. Regulates vulval precursor cell (VPC) differentiation, in concert with homeobox protein lin-39. Involved in promoting embryogenesis, in concert with homeobox protein nob-1. May play a role in modulation of lifespan and immunity. The chain is Nuclear hormone receptor family member nhr-25 from Caenorhabditis elegans.